We begin with the raw amino-acid sequence, 255 residues long: Endonuclease V (255 aa).

The Mg(2+) site is built by Asp-42 and Asp-110.

The protein belongs to the endonuclease V family. The cofactor is Mg(2+).

It localises to the cytoplasm. It carries out the reaction Endonucleolytic cleavage at apurinic or apyrimidinic sites to products with a 5'-phosphate.. Its function is as follows. DNA repair enzyme involved in the repair of deaminated bases. Selectively cleaves double-stranded DNA at the second phosphodiester bond 3' to a deoxyinosine leaving behind the intact lesion on the nicked DNA. In Aeropyrum pernix (strain ATCC 700893 / DSM 11879 / JCM 9820 / NBRC 100138 / K1), this protein is Endonuclease V.